The following is a 64-amino-acid chain: MPDVKCVCCKEGKECACKGKECCTTGECCKDGTCCGKCTNAACKCADGCKCGSGCSCTEGNCAC.

Belongs to the metallothionein superfamily. Type 4 family.

Its function is as follows. Metallothioneins have a high content of cysteine residues that bind various heavy metals. The sequence is that of Metallothionein from Sterechinus neumayeri (Antarctic sea urchin).